Reading from the N-terminus, the 561-residue chain is MNINVAELLNGNYILLLFVVLALGLCLGKLRLGSIQLGNSIGVLVVSLLLGQQHFSINTDALNLGFMLFIFCVGVEAGPNFFSIFFRDGKNYLMLALVMVGSALVIALGLGKLFGWDIGLTAGMLAGSMTSTPVLVGAGDTLRHSGMESRQLSLALDNLSLGYALTYLIGLVSLIVGARYLPKLQHQDLQTSAQQIARERGLDTDANRKVYLPVIRAYRVGPELVAWTDGKNLRELGIYRQTGCYIERIRRNGILANPDGDAVLQMGDEIALVGYPDAHARLDPSFRNGKEVFDRDLLDMRIVTEEVVVKNHNAVGKRLAQLKLTDHGCFLNRVIRSQIEMPIDDNVVLNKGDVLQVSGDARRVKTIADRIGFISIHSQVTDLLAFCAFFVIGLMIGMITFQFSTFSFGMGNAAGLLFAGIMLGFMRANHPTFGYIPQGALSMVKEFGLMVFMAGVGLSAGSGINNGLGAIGGQMLIAGLIVSLVPVVICFLFGAYVLRMNRALLFGAMMGARTCAPAMEIISDTARSNIPALGYAGTYAIANVLLTLAGTIIVMVWPGLG.

Helical transmembrane passes span 8-28, 32-52, 66-86, 94-114, and 158-178; these read LLNG…LCLG, LGSI…LLGQ, FMLF…SIFF, MLAL…GKLF, and NLSL…IVGA. 2 consecutive RCK C-terminal domains span residues 200–288 and 292–373; these read RGLD…SFRN and VFDR…RIGF. 5 consecutive transmembrane segments (helical) span residues 383 to 403, 406 to 426, 451 to 471, 475 to 495, and 540 to 560; these read LLAF…TFQF, FSFG…LGFM, VFMA…LGAI, MLIA…LFGA, and AIAN…WPGL.

The protein belongs to the AAE transporter (TC 2.A.81) family. YbjL subfamily.

It is found in the cell membrane. This is Putative transport protein YbjL from Escherichia coli O127:H6 (strain E2348/69 / EPEC).